The primary structure comprises 407 residues: Argininosuccinate synthase (407 aa).

ATP contacts are provided by residues 13-21 (AYSGGLDTS) and A40. Residues Y91 and S96 each coordinate L-citrulline. G121 is a binding site for ATP. L-aspartate is bound by residues T123, N127, and D128. N127 contacts L-citrulline. Residues R131, S182, S191, E267, and Y279 each contribute to the L-citrulline site.

This sequence belongs to the argininosuccinate synthase family. Type 1 subfamily. Homotetramer.

It localises to the cytoplasm. The enzyme catalyses L-citrulline + L-aspartate + ATP = 2-(N(omega)-L-arginino)succinate + AMP + diphosphate + H(+). It functions in the pathway amino-acid biosynthesis; L-arginine biosynthesis; L-arginine from L-ornithine and carbamoyl phosphate: step 2/3. The protein is Argininosuccinate synthase of Mesorhizobium japonicum (strain LMG 29417 / CECT 9101 / MAFF 303099) (Mesorhizobium loti (strain MAFF 303099)).